We begin with the raw amino-acid sequence, 420 residues long: Ketoreductase sphF (420 aa).

Positions 1–21 (MLERPSFPRLGAGTRHHRPLG) are disordered. Residues 29–49 (WLLAFTGISGIAGMMIPYVPW) traverse the membrane as a helical segment. The disordered stretch occupies residues 275-298 (RQKRSPSPGRHPALGSPPAQLRQD).

It localises to the membrane. The catalysed reaction is 3-oxopresphingofungin + NADPH + 2 H(+) = presphingofungin + NADP(+). It participates in secondary metabolite biosynthesis. Ketoreductase; part of the gene cluster that mediates the biosynthesis of sphingofungins, bioactive molecules acting as sphingolipid inhibitors via inhibiting serine palmitoyl transferase (SPT). Within the pathway, sphF catalyzes the reduction of the C-3 ketone of 3-keto-presphingofungin to produce presphingofungin. Sphingofungin biosynthesis starts with the PKS sphB that produces an C18 polyketide precursor 3-hydroxyoctadeca-4,10-dienoyl-ACP containing one delta-6 desaturation and one delta-12 desaturation. The aminoacyl transferase sphA uses the sphB product to produce 3-keto-presphingofungin by adding an aminomalonate molecule. SphF then reduces the C-3 ketone of 3-keto-presphingofungin which leads to presphingofungin. The cytochrome P450 monooxygenase sphH converts presphingofungin into sphingofungin B1 which is further converted to sphingofungin B by the dioxygenase sphC. SphC is also able to convert presphingofungin into sphingofungin B2. The acetyltransferase sphE acetylates sphingofungin B to produce sphingofungin C, but can also convert sphingofungin B1 into sphingofungin C1 and sphingofungin B2 into sphingofungin C2. Finally, sphingofungin C can be spontaneously converted into sphingofungin D. In Aspergillus fumigatus (strain CBS 144.89 / FGSC A1163 / CEA10) (Neosartorya fumigata), this protein is Ketoreductase sphF.